Here is a 757-residue protein sequence, read N- to C-terminus: 5-methyltetrahydropteroyltriglutamate--homocysteine methyltransferase (757 aa).

Residues 16–19 and Lys-112 contribute to the 5-methyltetrahydropteroyltri-L-glutamate site; that span reads RELK. Residues 432–434 and Glu-485 each bind L-homocysteine; that span reads IGS. L-methionine-binding positions include 432–434 and Glu-485; that span reads IGS. Residues 516–517 and Trp-562 each bind 5-methyltetrahydropteroyltri-L-glutamate; that span reads RC. L-homocysteine is bound at residue Asp-600. Asp-600 contacts L-methionine. 5-methyltetrahydropteroyltri-L-glutamate is bound at residue Glu-606. Zn(2+)-binding residues include His-642, Cys-644, and Glu-666. The active-site Proton donor is the His-695. Cys-727 contacts Zn(2+).

This sequence belongs to the vitamin-B12 independent methionine synthase family. Requires Zn(2+) as cofactor.

It catalyses the reaction 5-methyltetrahydropteroyltri-L-glutamate + L-homocysteine = tetrahydropteroyltri-L-glutamate + L-methionine. It participates in amino-acid biosynthesis; L-methionine biosynthesis via de novo pathway; L-methionine from L-homocysteine (MetE route): step 1/1. In terms of biological role, catalyzes the transfer of a methyl group from 5-methyltetrahydrofolate to homocysteine resulting in methionine formation. This is 5-methyltetrahydropteroyltriglutamate--homocysteine methyltransferase from Actinobacillus pleuropneumoniae serotype 5b (strain L20).